The sequence spans 96 residues: uncharacterized protein (96 aa).

The chain crosses the membrane as a helical span at residues 13–35 (PVVRYVVALLHWLLWRVVVIIAI).

Its subcellular location is the membrane. This is an uncharacterized protein from Archaeoglobus fulgidus (strain ATCC 49558 / DSM 4304 / JCM 9628 / NBRC 100126 / VC-16).